A 1202-amino-acid polypeptide reads, in one-letter code: QFSIKVMQSSYVGLRSTVQFLQLSQIIWIKSRIAKSENDYINSMKKFLSHKKQNNRKFHTRSMSNGLGSLNLQKRPTPSPTVLNNKFLPTRNQYHSEDINNNILFDIIIKETDKGLKKCVLIGLNLTTNKIFNMEYIDLNTSNRKFKIFVANNLINIKNNGINIDNLYIPKRINSKTLTDLITLSFPNIKVQWYLKSEITNLFLKSDYTNFIKEINERKTLGKSILSKLIIYYNDSSPHCNIGKSSRKVTAISHTKRDIHTSTENNHKKDLFGWHRFNSSNYYDCIDSGALTIEINKLFEYYKDNFTQPFFVVNAKIKFPTGNVRSIGFGNVTTLTDKETLIKTLAIFLEREDIHTVMSYDEGDIDESKFPKGSLSFDFKPLKTIEGTKYANYTFPIKKDIVVKDINKKINFNGLDLPKTMDLSKWPNLKLNKDKTSGEIRMTIKNKNNQSYDIIGHMIINDGENVITFNRAVDNSIIKIFTVTDSMGNTNDPNLFKRIVEEKGNQTVYVYENNETVCVVQDKKFGFISKIAKNKTVNLKSISTLDLETRMDTNNRLIPICMSYYNNKKLNTFLFKDDWQEEMLAAFKTLLKSTNHGKKFYVHNLAHFDSVFILDTLSKLGKIDIIMRDDKIMKLKITFKIPGKNTEYSISFLDSLLMLPNSLDNLSKAFNIENKKSVFPLKFTNGAVTPFNYIGAVPGYEYFYNTPNKKFTKDDYKKYCKDFNNNWDFNKELKNYCEIDCLALHDILTLFAKMIHNEFSVDITRYVSLSSITFAIFRTNFLPENKIPNITCTKLHYILKQAYTGGYCDVFKPEGKNIHSYDINSLYPSAMAKFDMPTGTPLHILGDPYKFTKDPFGFVFAEVTAPDLKVPIIQTRVQTSGGVRTVAPIGTFKGWYLLDELINAKKYGYTFKISEAYLFERLNIFKEYIHRLYTIKSSYTPDDPMYFIAKLLMNSLYGRFGMDPITIKYSVLTPEESEEKLKNSSCIEATTLPSGNVLFKENKPLGEFSNLNTSVPISAAIAAYSRMIMSEYLIKYADNLYAVDTDGIKVDTEIDKKYVSDKELGLMKHEYTFKEAVFVAPKVYGGLFDKPYKNKVEIVKVKGLKEPIQYSDLKDVYIKSLLKLFIILNFLRQLALSTIVIKEQPYSLRVSSFKRVLVFNESGKIISTLPLKLENDKIVSNPHLIVNSEGNPSAFKLSLIKI.

It belongs to the DNA polymerase type-B family.

The protein resides in the mitochondrion. It catalyses the reaction DNA(n) + a 2'-deoxyribonucleoside 5'-triphosphate = DNA(n+1) + diphosphate. In Ascobolus immersus, this protein is Probable DNA polymerase.